A 529-amino-acid chain; its full sequence is Bifunctional purine biosynthesis protein PurH (529 aa).

The region spanning 1-148 (MQQRRPVRRA…KNHKDVAIVV (148 aa)) is the MGS-like domain.

The protein belongs to the PurH family.

The enzyme catalyses (6R)-10-formyltetrahydrofolate + 5-amino-1-(5-phospho-beta-D-ribosyl)imidazole-4-carboxamide = 5-formamido-1-(5-phospho-D-ribosyl)imidazole-4-carboxamide + (6S)-5,6,7,8-tetrahydrofolate. It catalyses the reaction IMP + H2O = 5-formamido-1-(5-phospho-D-ribosyl)imidazole-4-carboxamide. It participates in purine metabolism; IMP biosynthesis via de novo pathway; 5-formamido-1-(5-phospho-D-ribosyl)imidazole-4-carboxamide from 5-amino-1-(5-phospho-D-ribosyl)imidazole-4-carboxamide (10-formyl THF route): step 1/1. Its pathway is purine metabolism; IMP biosynthesis via de novo pathway; IMP from 5-formamido-1-(5-phospho-D-ribosyl)imidazole-4-carboxamide: step 1/1. The polypeptide is Bifunctional purine biosynthesis protein PurH (Salmonella schwarzengrund (strain CVM19633)).